Reading from the N-terminus, the 547-residue chain is NADH-ubiquinone oxidoreductase chain 5 (547 aa).

15 helical membrane passes run 3–23 (ISIF…IFFV), 45–65 (YFNS…VLVF), 80–100 (YFML…SGCF), 101–121 (SMLV…LFYN), 132–152 (TVLT…STIF), 198–218 (ISSL…IMNF), 227–247 (VIMI…MAAL), 264–284 (MGFS…IHLL), 319–339 (VPYF…GLVF), 352–372 (FFFS…SVFL), 399–419 (VVMN…IWWM), 430–450 (FLYV…VVGF), 460–477 (FVYK…VYGL), 485–505 (LFLG…GFWS), and 512–532 (LYFN…WGCI).

It belongs to the complex I subunit 5 family.

It is found in the mitochondrion inner membrane. The enzyme catalyses a ubiquinone + NADH + 5 H(+)(in) = a ubiquinol + NAD(+) + 4 H(+)(out). Core subunit of the mitochondrial membrane respiratory chain NADH dehydrogenase (Complex I) that is believed to belong to the minimal assembly required for catalysis. Complex I functions in the transfer of electrons from NADH to the respiratory chain. The immediate electron acceptor for the enzyme is believed to be ubiquinone. This is NADH-ubiquinone oxidoreductase chain 5 (ND5) from Ascaris suum (Pig roundworm).